Consider the following 1210-residue polypeptide: MRPSGTAGAALLALLAALCPASRALEEKKVCQGTSNKLTQLGTFEDHFLSLQRMFNNCEVVLGNLEITYVQRNYDLSFLKTIQEVAGYVLIALNTVERIPLENLQIIRGNMYYENSYALAVLSNYDANKTGLKELPMRNLQEILHGAVRFSNNPALCNVESIQWRDIVSSDFLSNMSMDFQNHLGSCQKCDPSCPNGSCWGAGEENCQKLTKIICAQQCSGRCRGKSPSDCCHNQCAAGCTGPRESDCLVCRKFRDEATCKDTCPPLMLYNPTTYQMDVNPEGKYSFGATCVKKCPRNYVVTDHGSCVRACGADSYEMEEDGVRKCKKCEGPCRKVCNGIGIGEFKDSLSINATNIKHFKNCTSISGDLHILPVAFRGDSFTHTPPLDPQELDILKTVKEITGFLLIQAWPENRTDLHAFENLEIIRGRTKQHGQFSLAVVSLNITSLGLRSLKEISDGDVIISGNKNLCYANTINWKKLFGTSGQKTKIISNRGENSCKATGQVCHALCSPEGCWGPEPRDCVSCRNVSRGRECVDKCNLLEGEPREFVENSECIQCHPECLPQAMNITCTGRGPDNCIQCAHYIDGPHCVKTCPAGVMGENNTLVWKYADAGHVCHLCHPNCTYGCTGPGLEGCPTNGPKIPSIATGMVGALLLLLVVALGIGLFMRRRHIVRKRTLRRLLQERELVEPLTPSGEAPNQALLRILKETEFKKIKVLGSGAFGTVYKGLWIPEGEKVKIPVAIKELREATSPKANKEILDEAYVMASVDNPHVCRLLGICLTSTVQLITQLMPFGCLLDYVREHKDNIGSQYLLNWCVQIAKGMNYLEDRRLVHRDLAARNVLVKTPQHVKITDFGLAKLLGAEEKEYHAEGGKVPIKWMALESILHRIYTHQSDVWSYGVTVWELMTFGSKPYDGIPASEISSILEKGERLPQPPICTIDVYMIMVKCWMIDADSRPKFRELIIEFSKMARDPQRYLVIQGDERMHLPSPTDSNFYRALMDEEDMDDVVDADEYLIPQQGFFSSPSTSRTPLLSSLSATSNNSTVACIDRNGLQSCPIKEDSFLQRYSSDPTGALTEDSIDDTFLPVPEYINQSVPKRPAGSVQNPVYHNQPLNPAPSRDPHYQDPHSTAVGNPEYLNTVQPTCVNSTFDSPAHWAQKGSHQISLDNPDYQQDFFPKEAKPNGIFKGSTAENAEYLRVAPQSSEFIGA.

Positions 1–24 are cleaved as a signal peptide; sequence MRPSGTAGAALLALLAALCPASRA. At 25–645 the chain is on the extracellular side; that stretch reads LEEKKVCQGT…CPTNGPKIPS (621 aa). The cysteines at positions 31 and 58 are disulfide-linked. Residue Asn-56 is glycosylated (N-linked (GlcNAc...) (complex) asparagine; atypical; partial). An N-linked (GlcNAc...) asparagine; atypical glycan is attached at Asn-73. The stretch at 75–300 is one Approximate repeat; the sequence is DLSFLKTIQE…CVKKCPRNYV (226 aa). 3 N-linked (GlcNAc...) asparagine glycosylation sites follow: Asn-128, Asn-175, and Asn-196. Intrachain disulfides connect Cys-157-Cys-187, Cys-190-Cys-199, Cys-194-Cys-207, Cys-215-Cys-223, Cys-219-Cys-231, Cys-232-Cys-240, Cys-236-Cys-248, Cys-251-Cys-260, Cys-264-Cys-291, Cys-295-Cys-307, Cys-311-Cys-326, Cys-329-Cys-333, and Cys-337-Cys-362. Ser-229 bears the Phosphoserine mark. N-linked (GlcNAc...) asparagine glycans are attached at residues Asn-352, Asn-361, Asn-413, and Asn-444. One copy of the Approximate repeat lies at 390 to 600; it reads QELDILKTVK…CVKTCPAGVM (211 aa). Disulfide bonds link Cys-470-Cys-499, Cys-506-Cys-515, Cys-510-Cys-523, Cys-526-Cys-535, Cys-539-Cys-555, Cys-558-Cys-571, Cys-562-Cys-579, Cys-582-Cys-591, Cys-595-Cys-617, Cys-620-Cys-628, and Cys-624-Cys-636. A glycan (N-linked (GlcNAc...) asparagine) is linked at Asn-528. N-linked (GlcNAc...) asparagine; partial glycosylation occurs at Asn-568. N-linked (GlcNAc...) asparagine; partial glycosylation occurs at Asn-603. N-linked (GlcNAc...) (high mannose) asparagine glycosylation occurs at Asn-623. A helical membrane pass occupies residues 646-668; the sequence is IATGMVGALLLLLVVALGIGLFM. Residues 669–1210 are Cytoplasmic-facing; the sequence is RRRHIVRKRT…APQSSEFIGA (542 aa). Thr-678 carries the post-translational modification Phosphothreonine; by PKC and PKD/PRKD1. The tract at residues 688–704 is important for dimerization, phosphorylation and activation; that stretch reads LVEPLTPSGEAPNQALL. Thr-693 carries the phosphothreonine; by PKD/PRKD1 modification. The residue at position 695 (Ser-695) is a Phosphoserine. In terms of domain architecture, Protein kinase spans 712-979; the sequence is FKKIKVLGSG…KMARDPQRYL (268 aa). Residue Lys-716 forms a Glycyl lysine isopeptide (Lys-Gly) (interchain with G-Cter in ubiquitin) linkage. 718–726 is a binding site for ATP; it reads LGSGAFGTV. Lys-737 is covalently cross-linked (Glycyl lysine isopeptide (Lys-Gly) (interchain with G-Cter in ubiquitin)). Lys-745 serves as a coordination point for ATP. Lys-745 is modified (N6-(2-hydroxyisobutyryl)lysine). Glycyl lysine isopeptide (Lys-Gly) (interchain with G-Cter in ubiquitin) cross-links involve residues Lys-754 and Lys-757. Residue 790–791 coordinates ATP; the sequence is TQ. Asp-837 (proton acceptor) is an active-site residue. Asp-855 lines the ATP pocket. Lys-867 is covalently cross-linked (Glycyl lysine isopeptide (Lys-Gly) (interchain with G-Cter in ubiquitin)). Tyr-869 is subject to Phosphotyrosine. Residues Lys-929, Lys-960, and Lys-970 each participate in a glycyl lysine isopeptide (Lys-Gly) (interchain with G-Cter in ubiquitin) cross-link. Phosphoserine is present on residues Ser-991 and Ser-995. Residues Tyr-998 and Tyr-1016 each carry the phosphotyrosine; by autocatalysis modification. 2 positions are modified to phosphoserine: Ser-1026 and Ser-1039. The residue at position 1041 (Thr-1041) is a Phosphothreonine. At Ser-1042 the chain carries Phosphoserine. Cys-1049 carries S-palmitoyl cysteine lipidation. Ser-1064 bears the Phosphoserine mark. Tyr-1069 is modified (phosphotyrosine). Ser-1070, Ser-1071, and Ser-1081 each carry phosphoserine. 2 positions are modified to phosphotyrosine; by autocatalysis: Tyr-1092 and Tyr-1110. The disordered stretch occupies residues 1097–1137; sequence VPKRPAGSVQNPVYHNQPLNPAPSRDPHYQDPHSTAVGNPE. 2 stretches are compositionally biased toward polar residues: residues 1104 to 1115 and 1128 to 1137; these read SVQNPVYHNQPL and PHSTAVGNPE. The S-palmitoyl cysteine moiety is linked to residue Cys-1146. Residue Ser-1166 is modified to Phosphoserine. Tyr-1172 and Tyr-1197 each carry phosphotyrosine; by autocatalysis. The residue at position 1199 (Arg-1199) is an Omega-N-methylarginine.

Belongs to the protein kinase superfamily. Tyr protein kinase family. EGF receptor subfamily. In terms of assembly, binding of the ligand triggers homo- and/or heterodimerization of the receptor triggering its autophosphorylation. Heterodimer with ERBB2. Forms a complex with CCDC88A/GIV (via SH2-like regions) and GNAI3 which leads to enhanced EGFR signaling and triggering of cell migration; binding to CCDC88A requires autophosphorylation of the EGFR C-terminal region, and ligand stimulation is required for recruitment of GNAI3 to the complex. Interacts with ERRFI1; inhibits dimerization of the kinase domain and autophosphorylation. Part of a complex with ERBB2 and either PIK3C2A or PIK3C2B. Interacts with GRB2; an adapter protein coupling the receptor to downstream signaling pathways. Interacts with GAB2; involved in signaling downstream of EGFR. Interacts with STAT3; mediates EGFR downstream signaling in cell proliferation. Interacts with RIPK1; involved in NF-kappa-B activation. Interacts (autophosphorylated) with CBL, CBLB and CBLC; involved in EGFR ubiquitination and regulation; interaction with CBL is reduced in the presence of tensin TNS4. Interacts with SOCS5; regulates EGFR degradation through ELOC- and ELOB-mediated ubiquitination and proteasomal degradation. Interacts with PRMT5; methylates EGFR and enhances interaction with PTPN6. Interacts (phosphorylated) with PTPN6; inhibits EGFR-dependent activation of MAPK/ERK. Interacts with COPG1; essential for regulation of EGF-dependent nuclear transport of EGFR by retrograde trafficking from the Golgi to the ER. Interacts with TNK2; this interaction is dependent on EGF stimulation and kinase activity of EGFR. Interacts with PCNA; positively regulates PCNA. Interacts with PELP1. Interacts with MUC1. Interacts with AP2M1. Interacts with FER. May interact with EPS8; mediates EPS8 phosphorylation. Interacts (via SH2 domains) with GRB2, NCK1 and NCK2. Interacts with ATXN2. Interacts with GAREM1. Interacts (ubiquitinated) with ANKRD13A/B/D; the interaction is direct and may regulate EGFR internalization after EGF stimulation. Interacts with GPER1; the interaction occurs in an estrogen-dependent manner. Interacts (via C-terminal cytoplasmic kinase domain) with ZPR1 (via zinc fingers). Interacts with RNF115 and RNF126. Interacts with GPRC5A (via its transmembrane domain). Interacts with FAM83B; positively regulates EGFR inducing its autophosphorylation in absence of stimulation by EGF. Interacts with LAPTM4B; positively correlates with EGFR activation. Interacts with STX19. Interacts with CD44. Interacts with PGRMC1; the interaction requires PGRMC1 homodimerization. Interacts with PIKFYVE. Interacts with NEU3. Interacts with TRAF4. Interacts with the ant venom OMEGA-myrmeciitoxin(02)-Mg1a. Interacts with CD82; this interaction facilitates ligand-induced endocytosis of the receptor and its subsequent desensitization. In terms of processing, phosphorylated on Tyr residues in response to EGF. Phosphorylation at Ser-695 is partial and occurs only if Thr-693 is phosphorylated. Phosphorylation at Thr-678 and Thr-693 by PRKD1 inhibits EGF-induced MAPK8/JNK1 activation. Dephosphorylation by PTPRJ prevents endocytosis and stabilizes the receptor at the plasma membrane. Autophosphorylation at Tyr-1197 is stimulated by methylation at Arg-1199 and enhances interaction with PTPN6. Autophosphorylation at Tyr-1092 and/or Tyr-1110 recruits STAT3. Dephosphorylated by PTPN1 and PTPN2. Post-translationally, monoubiquitinated and polyubiquitinated upon EGF stimulation; which does not affect tyrosine kinase activity or signaling capacity but may play a role in lysosomal targeting. Polyubiquitin linkage is mainly through 'Lys-63', but linkage through 'Lys-48', 'Lys-11' and 'Lys-29' also occurs. Deubiquitination by OTUD7B prevents degradation. Ubiquitinated by RNF115 and RNF126. Ubiquitinated by ZNRF1 or CBL at different lysines in response to EGF stimulation; leading to recruitment of the ESCRT machinery and subsequent degradation in the lysosomes. Deubiquitinated by UCHL1 leading to the inhibition of its degradation. Palmitoylated on Cys residues by ZDHHC20. Palmitoylation inhibits internalization after ligand binding, and increases the persistence of tyrosine-phosphorylated EGFR at the cell membrane. Palmitoylation increases the amplitude and duration of EGFR signaling. In terms of processing, methylated. Methylation at Arg-1199 by PRMT5 stimulates phosphorylation at Tyr-1197. As to expression, ubiquitously expressed. Isoform 2 is also expressed in ovarian cancers.

The protein resides in the cell membrane. Its subcellular location is the endoplasmic reticulum membrane. The protein localises to the golgi apparatus membrane. It localises to the nucleus membrane. It is found in the endosome. The protein resides in the endosome membrane. Its subcellular location is the nucleus. The protein localises to the secreted. The catalysed reaction is L-tyrosyl-[protein] + ATP = O-phospho-L-tyrosyl-[protein] + ADP + H(+). With respect to regulation, endocytosis and inhibition of the activated EGFR by phosphatases like PTPRJ and PTPRK constitute immediate regulatory mechanisms. Upon EGF-binding phosphorylates EPS15 that regulates EGFR endocytosis and activity. Moreover, inducible feedback inhibitors including LRIG1, SOCS4, SOCS5 and ERRFI1 constitute alternative regulatory mechanisms for the EGFR signaling. Up-regulated by NEU3-mediated desialylation of N-linked glycan at Asn-528. Receptor tyrosine kinase binding ligands of the EGF family and activating several signaling cascades to convert extracellular cues into appropriate cellular responses. Known ligands include EGF, TGFA/TGF-alpha, AREG, epigen/EPGN, BTC/betacellulin, epiregulin/EREG and HBEGF/heparin-binding EGF. Ligand binding triggers receptor homo- and/or heterodimerization and autophosphorylation on key cytoplasmic residues. The phosphorylated receptor recruits adapter proteins like GRB2 which in turn activates complex downstream signaling cascades. Activates at least 4 major downstream signaling cascades including the RAS-RAF-MEK-ERK, PI3 kinase-AKT, PLCgamma-PKC and STATs modules. May also activate the NF-kappa-B signaling cascade. Also directly phosphorylates other proteins like RGS16, activating its GTPase activity and probably coupling the EGF receptor signaling to the G protein-coupled receptor signaling. Also phosphorylates MUC1 and increases its interaction with SRC and CTNNB1/beta-catenin. Positively regulates cell migration via interaction with CCDC88A/GIV which retains EGFR at the cell membrane following ligand stimulation, promoting EGFR signaling which triggers cell migration. Plays a role in enhancing learning and memory performance. Plays a role in mammalian pain signaling (long-lasting hypersensitivity). In terms of biological role, isoform 2 may act as an antagonist of EGF action. Functionally, (Microbial infection) Acts as a receptor for hepatitis C virus (HCV) in hepatocytes and facilitates its cell entry. Mediates HCV entry by promoting the formation of the CD81-CLDN1 receptor complexes that are essential for HCV entry and by enhancing membrane fusion of cells expressing HCV envelope glycoproteins. In Homo sapiens (Human), this protein is Epidermal growth factor receptor.